A 552-amino-acid polypeptide reads, in one-letter code: 2,3-bisphosphoglycerate-independent phosphoglycerate mutase (552 aa).

Residues 1–25 (MTNTQQQSESIDDNQAQLSKQQNSD) show a composition bias toward polar residues. The disordered stretch occupies residues 1–30 (MTNTQQQSESIDDNQAQLSKQQNSDNNKKV). Mn(2+)-binding residues include Asp-38 and Ser-88. The Phosphoserine intermediate role is filled by Ser-88. Residues His-149, 179 to 180 (RD), Arg-217, Arg-223, 293 to 296 (RADR), and Lys-373 contribute to the substrate site. Residues Asp-440, His-444, Asp-481, His-482, and His-500 each contribute to the Mn(2+) site.

The protein belongs to the BPG-independent phosphoglycerate mutase family. As to quaternary structure, monomer. Mn(2+) serves as cofactor.

It catalyses the reaction (2R)-2-phosphoglycerate = (2R)-3-phosphoglycerate. The protein operates within carbohydrate degradation; glycolysis; pyruvate from D-glyceraldehyde 3-phosphate: step 3/5. Functionally, catalyzes the interconversion of 2-phosphoglycerate and 3-phosphoglycerate. The sequence is that of 2,3-bisphosphoglycerate-independent phosphoglycerate mutase from Psychrobacter arcticus (strain DSM 17307 / VKM B-2377 / 273-4).